Reading from the N-terminus, the 437-residue chain is Vacuolar protein sorting-associated protein 4A (437 aa).

Positions 1 to 84 are interaction with CHMP1B; sequence MTTSTLQKAI…RSKEKHGKKP (84 aa). The MIT domain occupies 2–80; it reads TTSTLQKAID…KDYLRSKEKH (79 aa). At Lys8 the chain carries N6-acetyllysine. Residues 75–106 are disordered; that stretch reads RSKEKHGKKPVKENQSEGKGSDSDSEGDNPEK. Basic and acidic residues predominate over residues 84 to 96; it reads PVKENQSEGKGSD. Phosphoserine is present on residues Ser95 and Ser97. 167–174 provides a ligand contact to ATP; sequence GPPGTGKS.

It belongs to the AAA ATPase family. As to quaternary structure, proposed to be monomeric or homodimeric in nucleotide-free form and to oligomerize upon binding to ATP to form two stacked hexameric or heptameric rings with a central pore through which ESCRT-III substrates are translocated in an ATP-dependent manner. Interacts with CHMP1A, CHMP1B, CHMP2A, CHMP2B, CHMP3, CHMP4A, CHMP4B, CHMP4C and CHMP6. Interacts with VPS4B; the interaction suggests a heteromeric assembly with VPS4B. Interacts with SPAST. Interacts with IST1. Interacts with ZFYVE19/ANCHR; leading to retain it at midbody. In terms of tissue distribution, ubiquitously expressed.

The protein resides in the late endosome membrane. The protein localises to the midbody. Its subcellular location is the cytoplasm. It localises to the cytoskeleton. It is found in the spindle. It carries out the reaction ATP + H2O = ADP + phosphate + H(+). Functionally, involved in late steps of the endosomal multivesicular bodies (MVB) pathway. Recognizes membrane-associated ESCRT-III assemblies and catalyzes their disassembly, possibly in combination with membrane fission. Redistributes the ESCRT-III components to the cytoplasm for further rounds of MVB sorting. MVBs contain intraluminal vesicles (ILVs) that are generated by invagination and scission from the limiting membrane of the endosome and mostly are delivered to lysosomes enabling degradation of membrane proteins, such as stimulated growth factor receptors, lysosomal enzymes and lipids. It is required for proper accomplishment of various processes including the regulation of endosome size, primary cilium organization, mitotic spindle organization, chromosome segregation, and nuclear envelope sealing and spindle disassembly during anaphase. Involved in cytokinesis: retained at the midbody by ZFYVE19/ANCHR and CHMP4C until abscission checkpoint signaling is terminated at late cytokinesis. It is then released following dephosphorylation of CHMP4C, leading to abscission. VPS4A/B are required for the exosomal release of SDCBP, CD63 and syndecan. Critical for normal erythroblast cytokinesis and correct erythropoiesis. (Microbial infection) In conjunction with the ESCRT machinery also appears to function in topologically equivalent membrane fission events, such as the terminal stages of cytokinesis and enveloped virus budding (HIV-1 and other lentiviruses). The polypeptide is Vacuolar protein sorting-associated protein 4A (Homo sapiens (Human)).